A 284-amino-acid chain; its full sequence is 2-dehydro-3-deoxyphosphooctonate aldolase (284 aa).

This sequence belongs to the KdsA family.

The protein localises to the cytoplasm. It carries out the reaction D-arabinose 5-phosphate + phosphoenolpyruvate + H2O = 3-deoxy-alpha-D-manno-2-octulosonate-8-phosphate + phosphate. It participates in carbohydrate biosynthesis; 3-deoxy-D-manno-octulosonate biosynthesis; 3-deoxy-D-manno-octulosonate from D-ribulose 5-phosphate: step 2/3. The protein operates within bacterial outer membrane biogenesis; lipopolysaccharide biosynthesis. The polypeptide is 2-dehydro-3-deoxyphosphooctonate aldolase (Aliivibrio fischeri (strain ATCC 700601 / ES114) (Vibrio fischeri)).